The primary structure comprises 214 residues: uncharacterized protein (214 aa).

The next 2 membrane-spanning stretches (helical) occupy residues 19–39 (IAIFALAFISFILILIISYIL) and 50–70 (LALFLMDNLYSILLKIFLLIG).

Its subcellular location is the cell membrane. This is an uncharacterized protein from Methanocaldococcus jannaschii (strain ATCC 43067 / DSM 2661 / JAL-1 / JCM 10045 / NBRC 100440) (Methanococcus jannaschii).